The primary structure comprises 82 residues: Probable [Fe-S]-dependent transcriptional repressor (82 aa).

4 residues coordinate iron-sulfur cluster: Cys56, Cys61, Cys64, and Cys71.

The protein belongs to the FeoC family.

In terms of biological role, may function as a transcriptional regulator that controls feoABC expression. The chain is Probable [Fe-S]-dependent transcriptional repressor from Yersinia enterocolitica serotype O:8 / biotype 1B (strain NCTC 13174 / 8081).